A 215-amino-acid chain; its full sequence is Pyridoxine/pyridoxamine 5'-phosphate oxidase (215 aa).

Substrate contacts are provided by residues 9–12 (RRDY) and lysine 69. FMN contacts are provided by residues 64–69 (RVLLLK), 79–80 (FT), lysine 86, and glutamine 108. Residues tyrosine 126, arginine 130, and serine 134 each contribute to the substrate site. Residues 143–144 (QS) and tryptophan 188 each bind FMN. A substrate-binding site is contributed by 194-196 (RLH). Arginine 198 serves as a coordination point for FMN.

Belongs to the pyridoxamine 5'-phosphate oxidase family. Homodimer. FMN serves as cofactor.

It catalyses the reaction pyridoxamine 5'-phosphate + O2 + H2O = pyridoxal 5'-phosphate + H2O2 + NH4(+). The catalysed reaction is pyridoxine 5'-phosphate + O2 = pyridoxal 5'-phosphate + H2O2. Its pathway is cofactor metabolism; pyridoxal 5'-phosphate salvage; pyridoxal 5'-phosphate from pyridoxamine 5'-phosphate: step 1/1. It participates in cofactor metabolism; pyridoxal 5'-phosphate salvage; pyridoxal 5'-phosphate from pyridoxine 5'-phosphate: step 1/1. Catalyzes the oxidation of either pyridoxine 5'-phosphate (PNP) or pyridoxamine 5'-phosphate (PMP) into pyridoxal 5'-phosphate (PLP). The sequence is that of Pyridoxine/pyridoxamine 5'-phosphate oxidase from Pseudomonas syringae pv. syringae (strain B728a).